The sequence spans 243 residues: Zwei Ig domain protein zig-6 (243 aa).

Residues M1–A20 form the signal peptide. 2 Ig-like C2-type domains span residues P30 to I118 and G133 to T212. C47 and C102 are joined by a disulfide. Residues N91 and N142 are each glycosylated (N-linked (GlcNAc...) asparagine). A disulfide bridge links C145 with C196.

Expressed in head and tail body wall muscles.

The protein localises to the secreted. In terms of biological role, probably not involved in maintaining the position of ASI and ASH head neuron cell bodies and ventral nerve cord axons of PVQ, PVP, RMEV, AVK and HSN neurons. This is Zwei Ig domain protein zig-6 from Caenorhabditis elegans.